A 371-amino-acid chain; its full sequence is Cytochrome b (371 aa).

The next 4 helical transmembrane spans lie at 25–45, 69–90, 105–125, and 170–190; these read FGSM…FLAV, WMMQ…YTHI, WLSG…GYVL, and FFAL…LHIM. Residues histidine 75 and histidine 89 each contribute to the heme b site. Residues histidine 174 and histidine 188 each contribute to the heme b site. Histidine 193 serves as a coordination point for a ubiquinone. The next 4 membrane-spanning stretches (helical) occupy residues 218 to 238, 280 to 300, 312 to 332, and 339 to 358; these read YKDM…VAFF, LGGA…PFTH, IMQL…WAAT, and FTTI…ITNP.

It belongs to the cytochrome b family. As to quaternary structure, the cytochrome bc1 complex contains 3 respiratory subunits (MT-CYB, CYC1 and UQCRFS1), 2 core proteins (UQCRC1 and UQCRC2) and probably 6 low-molecular weight proteins. Requires heme b as cofactor.

It is found in the mitochondrion inner membrane. Component of the ubiquinol-cytochrome c reductase complex (complex III or cytochrome b-c1 complex) that is part of the mitochondrial respiratory chain. The b-c1 complex mediates electron transfer from ubiquinol to cytochrome c. Contributes to the generation of a proton gradient across the mitochondrial membrane that is then used for ATP synthesis. The polypeptide is Cytochrome b (MT-CYB) (Eryx colubrinus colubrinus).